Consider the following 296-residue polypeptide: Protein csh3 (296 aa).

The tract at residues Ala46–Ala138 is disordered. Positions Gly93–Lys103 are enriched in basic and acidic residues. The span at Gln111 to Glu124 shows a compositional bias: polar residues. An SH3 domain is found at Lys140–Asp199. The interval Val202 to Tyr246 is disordered. Residues Gln205 to Asn214 are compositionally biased toward pro residues. Residues Tyr215 to Pro235 are compositionally biased toward low complexity.

The sequence is that of Protein csh3 (csh3) from Schizosaccharomyces pombe (strain 972 / ATCC 24843) (Fission yeast).